Reading from the N-terminus, the 192-residue chain is UPF0301 protein Bamb_0737 (192 aa).

It belongs to the UPF0301 (AlgH) family.

The protein is UPF0301 protein Bamb_0737 of Burkholderia ambifaria (strain ATCC BAA-244 / DSM 16087 / CCUG 44356 / LMG 19182 / AMMD) (Burkholderia cepacia (strain AMMD)).